Consider the following 103-residue polypeptide: Small ribosomal subunit protein uS10 (103 aa).

It belongs to the universal ribosomal protein uS10 family. In terms of assembly, part of the 30S ribosomal subunit.

In terms of biological role, involved in the binding of tRNA to the ribosomes. The protein is Small ribosomal subunit protein uS10 of Chlorobaculum parvum (strain DSM 263 / NCIMB 8327) (Chlorobium vibrioforme subsp. thiosulfatophilum).